A 139-amino-acid polypeptide reads, in one-letter code: D-ribose pyranase (139 aa).

Catalysis depends on His20, which acts as the Proton donor. Substrate-binding positions include Asp28, His106, and 128–130 (YAN).

The protein belongs to the RbsD / FucU family. RbsD subfamily. In terms of assembly, homodecamer.

The protein resides in the cytoplasm. The enzyme catalyses beta-D-ribopyranose = beta-D-ribofuranose. It participates in carbohydrate metabolism; D-ribose degradation; D-ribose 5-phosphate from beta-D-ribopyranose: step 1/2. In terms of biological role, catalyzes the interconversion of beta-pyran and beta-furan forms of D-ribose. The protein is D-ribose pyranase of Actinobacillus pleuropneumoniae serotype 5b (strain L20).